A 434-amino-acid chain; its full sequence is Serine hydroxymethyltransferase (434 aa).

Residues Leu133 and 137–139 (GHL) contribute to the (6S)-5,6,7,8-tetrahydrofolate site. Residue Lys242 is modified to N6-(pyridoxal phosphate)lysine. 366–368 (SPF) is a (6S)-5,6,7,8-tetrahydrofolate binding site.

This sequence belongs to the SHMT family. As to quaternary structure, homodimer. The cofactor is pyridoxal 5'-phosphate.

Its subcellular location is the cytoplasm. It carries out the reaction (6R)-5,10-methylene-5,6,7,8-tetrahydrofolate + glycine + H2O = (6S)-5,6,7,8-tetrahydrofolate + L-serine. Its pathway is one-carbon metabolism; tetrahydrofolate interconversion. It functions in the pathway amino-acid biosynthesis; glycine biosynthesis; glycine from L-serine: step 1/1. Its function is as follows. Catalyzes the reversible interconversion of serine and glycine with tetrahydrofolate (THF) serving as the one-carbon carrier. This reaction serves as the major source of one-carbon groups required for the biosynthesis of purines, thymidylate, methionine, and other important biomolecules. Also exhibits THF-independent aldolase activity toward beta-hydroxyamino acids, producing glycine and aldehydes, via a retro-aldol mechanism. The polypeptide is Serine hydroxymethyltransferase (Erythrobacter litoralis (strain HTCC2594)).